We begin with the raw amino-acid sequence, 250 residues long: 5'-nucleotidase SurE (250 aa).

Residues Asp-8, Asp-9, Ser-40, and Asn-94 each coordinate a divalent metal cation.

The protein belongs to the SurE nucleotidase family. A divalent metal cation is required as a cofactor.

The protein localises to the cytoplasm. It carries out the reaction a ribonucleoside 5'-phosphate + H2O = a ribonucleoside + phosphate. Nucleotidase that shows phosphatase activity on nucleoside 5'-monophosphates. The chain is 5'-nucleotidase SurE from Wolbachia sp. subsp. Brugia malayi (strain TRS).